Here is a 729-residue protein sequence, read N- to C-terminus: Fatty acid oxidation complex subunit alpha (729 aa).

An enoyl-CoA hydratase/isomerase region spans residues 1–189 (MLYQSETLQL…KIGLVDAVVD (189 aa)). Residue aspartate 296 coordinates substrate. The 3-hydroxyacyl-CoA dehydrogenase stretch occupies residues 311 to 729 (AAPKLAAVLG…LLDVSTNQPA (419 aa)). NAD(+)-binding positions include methionine 324, aspartate 343, 400-402 (VVE), lysine 407, and serine 429. The For 3-hydroxyacyl-CoA dehydrogenase activity role is filled by histidine 450. Asparagine 453 contacts NAD(+). Asparagine 500 and tyrosine 660 together coordinate substrate.

In the N-terminal section; belongs to the enoyl-CoA hydratase/isomerase family. It in the C-terminal section; belongs to the 3-hydroxyacyl-CoA dehydrogenase family. As to quaternary structure, heterotetramer of two alpha chains (FadB) and two beta chains (FadA).

It catalyses the reaction a (3S)-3-hydroxyacyl-CoA + NAD(+) = a 3-oxoacyl-CoA + NADH + H(+). The enzyme catalyses a (3S)-3-hydroxyacyl-CoA = a (2E)-enoyl-CoA + H2O. It carries out the reaction a 4-saturated-(3S)-3-hydroxyacyl-CoA = a (3E)-enoyl-CoA + H2O. The catalysed reaction is (3S)-3-hydroxybutanoyl-CoA = (3R)-3-hydroxybutanoyl-CoA. It catalyses the reaction a (3Z)-enoyl-CoA = a 4-saturated (2E)-enoyl-CoA. The enzyme catalyses a (3E)-enoyl-CoA = a 4-saturated (2E)-enoyl-CoA. It participates in lipid metabolism; fatty acid beta-oxidation. Its function is as follows. Involved in the aerobic and anaerobic degradation of long-chain fatty acids via beta-oxidation cycle. Catalyzes the formation of 3-oxoacyl-CoA from enoyl-CoA via L-3-hydroxyacyl-CoA. It can also use D-3-hydroxyacyl-CoA and cis-3-enoyl-CoA as substrate. This chain is Fatty acid oxidation complex subunit alpha, found in Yersinia pseudotuberculosis serotype IB (strain PB1/+).